We begin with the raw amino-acid sequence, 74 residues long: uncharacterized protein (74 aa).

It to U.parvum UU416.

This is an uncharacterized protein from Mycoplasma pneumoniae (strain ATCC 29342 / M129 / Subtype 1) (Mycoplasmoides pneumoniae).